Consider the following 423-residue polypeptide: Ferrochelatase, mitochondrial (423 aa).

A mitochondrion-targeting transit peptide spans 1-54 (MRSLGANMAAALRAAGVLLRDPLVSSSWRVYQPWRWKSVAAAAAATTETAQHAQ). An N6-acetyllysine modification is found at Lys57. Protoporphyrin IX is bound by residues Arg115, Tyr123, and Ser130. At Lys138 the chain carries N6-succinyllysine. Cys196 lines the [2Fe-2S] cluster pocket. Residues His230 and Asp383 contribute to the active site. Residues Cys403, Cys406, and Cys411 each coordinate [2Fe-2S] cluster. Lys415 carries the post-translational modification N6-acetyllysine; alternate. Position 415 is an N6-succinyllysine; alternate (Lys415).

The protein belongs to the ferrochelatase family. Homodimer. Homotetramer. Interaction with PGRMC1; the interaction results in decreased FECH activity. Interacts with ABCB10 and SLC25A37; this interaction forms an oligomeric complex. Forms a complex with ABCB7 and ABCB10, where a dimeric FECH bridges ABCB7 and ABCB10 homodimers; this complex may be required for cellular iron homeostasis, mitochondrial function and heme biosynthesis. Interacts with ABCB7 and ABCB10. [2Fe-2S] cluster serves as cofactor.

Its subcellular location is the mitochondrion inner membrane. It carries out the reaction heme b + 2 H(+) = protoporphyrin IX + Fe(2+). The protein operates within porphyrin-containing compound metabolism; protoheme biosynthesis; protoheme from protoporphyrin-IX: step 1/1. In terms of biological role, catalyzes the ferrous insertion into protoporphyrin IX and participates in the terminal step in the heme biosynthetic pathway. The protein is Ferrochelatase, mitochondrial of Pan troglodytes (Chimpanzee).